Reading from the N-terminus, the 121-residue chain is Small ribosomal subunit protein uS13 (121 aa).

A disordered region spans residues 93–121 (RGLPMRGQRTRTNARTRKGPRKGAAALKK).

This sequence belongs to the universal ribosomal protein uS13 family. Part of the 30S ribosomal subunit. Forms a loose heterodimer with protein S19. Forms two bridges to the 50S subunit in the 70S ribosome.

Located at the top of the head of the 30S subunit, it contacts several helices of the 16S rRNA. In the 70S ribosome it contacts the 23S rRNA (bridge B1a) and protein L5 of the 50S subunit (bridge B1b), connecting the 2 subunits; these bridges are implicated in subunit movement. Contacts the tRNAs in the A and P-sites. In Acidovorax ebreus (strain TPSY) (Diaphorobacter sp. (strain TPSY)), this protein is Small ribosomal subunit protein uS13.